We begin with the raw amino-acid sequence, 185 residues long: Large ribosomal subunit protein uL5 (185 aa).

The protein belongs to the universal ribosomal protein uL5 family. As to quaternary structure, part of the 50S ribosomal subunit; part of the 5S rRNA/L5/L18/L25 subcomplex. Contacts the 5S rRNA and the P site tRNA. Forms a bridge to the 30S subunit in the 70S ribosome.

In terms of biological role, this is one of the proteins that bind and probably mediate the attachment of the 5S RNA into the large ribosomal subunit, where it forms part of the central protuberance. In the 70S ribosome it contacts protein S13 of the 30S subunit (bridge B1b), connecting the 2 subunits; this bridge is implicated in subunit movement. Contacts the P site tRNA; the 5S rRNA and some of its associated proteins might help stabilize positioning of ribosome-bound tRNAs. This is Large ribosomal subunit protein uL5 from Nitrobacter winogradskyi (strain ATCC 25391 / DSM 10237 / CIP 104748 / NCIMB 11846 / Nb-255).